A 327-amino-acid chain; its full sequence is tRNA pseudouridine synthase B (327 aa).

The active-site Nucleophile is the Asp-83.

The protein belongs to the pseudouridine synthase TruB family. Type 1 subfamily.

The catalysed reaction is uridine(55) in tRNA = pseudouridine(55) in tRNA. Its function is as follows. Responsible for synthesis of pseudouridine from uracil-55 in the psi GC loop of transfer RNAs. The polypeptide is tRNA pseudouridine synthase B (Mesomycoplasma hyopneumoniae (strain 232) (Mycoplasma hyopneumoniae)).